The primary structure comprises 189 residues: Elongation factor P (189 aa).

It belongs to the elongation factor P family.

The protein resides in the cytoplasm. The protein operates within protein biosynthesis; polypeptide chain elongation. In terms of biological role, involved in peptide bond synthesis. Stimulates efficient translation and peptide-bond synthesis on native or reconstituted 70S ribosomes in vitro. Probably functions indirectly by altering the affinity of the ribosome for aminoacyl-tRNA, thus increasing their reactivity as acceptors for peptidyl transferase. This Rhizobium johnstonii (strain DSM 114642 / LMG 32736 / 3841) (Rhizobium leguminosarum bv. viciae) protein is Elongation factor P.